The sequence spans 345 residues: Peptidoglycan-recognition protein LE (345 aa).

The segment covering 1–16 has biased composition (basic and acidic residues); sequence MSESGIKKLSQERTRE. The tract at residues 1 to 38 is disordered; it reads MSESGIKKLSQERTREWLASQEDEELESIAESSVVDSL. 4 N-linked (GlcNAc...) asparagine glycosylation sites follow: asparagine 52, asparagine 95, asparagine 98, and asparagine 106. A disordered region spans residues 124–152; that stretch reads NRRDRRHVSPPRDNAPKTPTHFEDDYQDE. One can recognise an N-acetylmuramoyl-L-alanine amidase domain in the interval 198–324; sequence PVKYVVILHT…CQCNSTESPG (127 aa). Peptidoglycan contacts are provided by residues histidine 206, 229 to 240, arginine 254, 261 to 267, and 314 to 322; these read HIESRGWNDIAY, AHTLGYN, and HCQCNSTES. Asparagine 318 carries N-linked (GlcNAc...) asparagine glycosylation.

It belongs to the N-acetylmuramoyl-L-alanine amidase 2 family. As to quaternary structure, monomer. Peptidoglycan binding induces oligomerization. In terms of tissue distribution, expressed in hemolymph. Localizes at the lumenal surface of the trachea (at protein level).

It is found in the secreted. Functionally, peptidoglycan-recognition protein that plays a key role in innate immunity by binding to murein peptidoglycans (PGN) of Gram-negative bacteria and activating the imd/Relish pathway. Has no activity against on Gram-positive bacteria. Binds to diaminopimelic acid-type PGN (DAP-type PGN), an activator of the imd/Relish pathway. Functions synergistically with PGRP-LC in producing resistance to E.coli and B.megaterium infections, which have the DAP-type peptidoglycan. Acts both upstream and in parallel with PGRP-LC in the imd/Relish pathway, and is required for infection-dependent activation of melanization. Required for Relish processing and nuclear translocation following proteolytic cleavage. Its localization suggests a role in the recognition and subsequent activation of the signaling at the first point of contact with invading bacteria. The chain is Peptidoglycan-recognition protein LE (PGRP-LE) from Drosophila melanogaster (Fruit fly).